The primary structure comprises 385 residues: MGILGLSKLIADLAPQAIRESEMKHFFGRKVAIDASMCLYQFLIAVRSEGAQLATVNGDPTSHLMGMFYRTIRLLDNGIKPVYVFDGKPPDLKSGELAKRAERREEAEKALKAATDAGDDAGIEKFNRRLVRVTKEHAKEAKELLTLMGVPYVDAPCEAEAQCAALVKAGKVYATATEDMDALTFGSTKLLRYLTYSEARKMPVKEFSYDKLLEGLAINNREFIDLCILLGCDYCESIKGIGPKRAIELINTYRDIETILDNLDSSKYTVPENWNYKVARELFIEPEVANADSIDLKWVEPDEEGLVKFLCGDRQFNEERVRNGAKKLMKSKQAQTQVRLDSFFKTLPSTPNATNAAKRKAEEAKKSANNKKAKTSGGGRGRRPK.

The N-domain stretch occupies residues 1–104 (MGILGLSKLI…GELAKRAERR (104 aa)). Residue aspartate 34 coordinates Mg(2+). DNA is bound by residues arginine 47 and arginine 70. Positions 86, 158, 160, 179, and 181 each coordinate Mg(2+). Positions 122-253 (GIEKFNRRLV…KRAIELINTY (132 aa)) are I-domain. Position 158 (glutamate 158) interacts with DNA. 2 residues coordinate DNA: glycine 231 and aspartate 233. A Mg(2+)-binding site is contributed by aspartate 233. The interval 336–344 (TQVRLDSFF) is interaction with PCNA. The interval 346–385 (TLPSTPNATNAAKRKAEEAKKSANNKKAKTSGGGRGRRPK) is disordered. Positions 368–385 (ANNKKAKTSGGGRGRRPK) are enriched in basic residues.

It belongs to the XPG/RAD2 endonuclease family. FEN1 subfamily. Interacts with PCNA. Three molecules of FEN1 bind to one PCNA trimer with each molecule binding to one PCNA monomer. PCNA stimulates the nuclease activity without altering cleavage specificity. Requires Mg(2+) as cofactor. Phosphorylated. Phosphorylation upon DNA damage induces relocalization to the nuclear plasma.

The protein resides in the nucleus. The protein localises to the nucleolus. Its subcellular location is the nucleoplasm. It localises to the mitochondrion. Its function is as follows. Structure-specific nuclease with 5'-flap endonuclease and 5'-3' exonuclease activities involved in DNA replication and repair. During DNA replication, cleaves the 5'-overhanging flap structure that is generated by displacement synthesis when DNA polymerase encounters the 5'-end of a downstream Okazaki fragment. It enters the flap from the 5'-end and then tracks to cleave the flap base, leaving a nick for ligation. Also involved in the long patch base excision repair (LP-BER) pathway, by cleaving within the apurinic/apyrimidinic (AP) site-terminated flap. Acts as a genome stabilization factor that prevents flaps from equilibrating into structures that lead to duplications and deletions. Also possesses 5'-3' exonuclease activity on nicked or gapped double-stranded DNA, and exhibits RNase H activity. Also involved in replication and repair of rDNA and in repairing mitochondrial DNA. The sequence is that of Flap endonuclease 1 from Drosophila simulans (Fruit fly).